A 2429-amino-acid chain; its full sequence is Reducing polyketide synthase ppsB (2429 aa).

The Ketosynthase family 3 (KS3) domain occupies 4–442; sequence DERVAIIGTG…GTNAHAILES (439 aa). Active-site for beta-ketoacyl synthase activity residues include Cys177, His317, and His362. The tract at residues 558-873 is malonyl-CoA:ACP transacylase (MAT) domain; sequence VFTGQGAQWP…PYIGLAHRGE (316 aa). Catalysis depends on Ser652, which acts as the For acyl/malonyl transferase activity. An N-terminal hotdog fold region spans residues 945 to 1075; it reads HPLLGVLSSE…GRVILALGEA (131 aa). The product template (PT) domain stretch occupies residues 945 to 1227; the sequence is HPLLGVLSSE…QLEGIHLTLS (283 aa). The region spanning 945 to 1233 is the PKS/mFAS DH domain; the sequence is HPLLGVLSSE…LTLSKPKNSS (289 aa). A C-terminal hotdog fold region spans residues 1090 to 1233; the sequence is SYPMNVDKFY…LTLSKPKNSS (144 aa). Residues 1409 to 2158 are methyltransferase (CMeT) domain; that stretch reads LEVGAGTGSA…ISDLYDQLTS (750 aa). Residues 2350–2425 form the Carrier domain; sequence EIILQLFKEK…SMVDEVVKRR (76 aa). Ser2385 is subject to O-(pantetheine 4'-phosphoryl)serine.

It functions in the pathway secondary metabolite biosynthesis. Functionally, reducing polyketide synthase; part of the gene cluster that mediates the biosynthesis of 2,4'-dihydroxy-3'-methoxypropiophenone. The first step of the pathway is the conversion of acetate into acetyl-CoA by the acyl-CoA ligase ppsA. Acetyl-CoA is then used as a starter unit by the polyketide synthase ppsB and condensed with 4 malonyl-CoA unit to produce the pentaketide backbone. During polyketide extension, the polykedite chain is probably reduced and dehydrated by the KR and PT domains, respectively. O-methylation seems to be catalyzed by an unknown methyltransferase rather than by the CMeT domain of ppsB. Two hydroxylations and one further decarboxylation step catalyzed by yet unknown enzymes are then required to yield 4'-hydroxy-3'-methoxypropiophenone. PpsC functions as a carrier protein to transport 4'-hydroxy-3'-methoxypropiophenone to a specific cell compartment in which 4'-hydroxy-3'-methoxypropiophenone is hydroxylated to 2,4'-dihydroxy-3'-methoxypropiophenone by a still to be identified enzyme. In Aspergillus oryzae (strain ATCC 42149 / RIB 40) (Yellow koji mold), this protein is Reducing polyketide synthase ppsB.